The primary structure comprises 397 residues: Elongation factor Tu (397 aa).

A tr-type G domain is found at 10-207; it reads KPHVNIGTIG…AVDTYIEEPK (198 aa). Residues 19-26 are G1; sequence GHVDHGKT. Residue 19–26 coordinates GTP; it reads GHVDHGKT. Residue threonine 26 participates in Mg(2+) binding. Residues 60 to 64 are G2; sequence GITIN. The segment at 81-84 is G3; sequence DCPG. GTP is bound by residues 81–85 and 136–139; these read DCPGH and NKID. Residues 136 to 139 are G4; the sequence is NKID. A G5 region spans residues 177 to 179; sequence SAL.

It belongs to the TRAFAC class translation factor GTPase superfamily. Classic translation factor GTPase family. EF-Tu/EF-1A subfamily. Monomer.

It localises to the cytoplasm. The catalysed reaction is GTP + H2O = GDP + phosphate + H(+). Its function is as follows. GTP hydrolase that promotes the GTP-dependent binding of aminoacyl-tRNA to the A-site of ribosomes during protein biosynthesis. This chain is Elongation factor Tu, found in Metamycoplasma hominis (strain ATCC 23114 / DSM 25592 / NBRC 14850 / NCTC 10111 / PG21) (Mycoplasma hominis).